Here is a 338-residue protein sequence, read N- to C-terminus: Glycerol-3-phosphate dehydrogenase [NAD(P)+] (338 aa).

NADPH-binding residues include Ser-12, Trp-13, Lys-34, and Lys-110. Sn-glycerol 3-phosphate is bound by residues Lys-110, Gly-141, and Ser-143. Ala-145 provides a ligand contact to NADPH. Residues Lys-196, Asp-249, Ser-259, Arg-260, and Asn-261 each coordinate sn-glycerol 3-phosphate. Lys-196 (proton acceptor) is an active-site residue. Arg-260 provides a ligand contact to NADPH. Residues Val-284 and Glu-286 each contribute to the NADPH site.

The protein belongs to the NAD-dependent glycerol-3-phosphate dehydrogenase family.

Its subcellular location is the cytoplasm. The enzyme catalyses sn-glycerol 3-phosphate + NAD(+) = dihydroxyacetone phosphate + NADH + H(+). It catalyses the reaction sn-glycerol 3-phosphate + NADP(+) = dihydroxyacetone phosphate + NADPH + H(+). The protein operates within membrane lipid metabolism; glycerophospholipid metabolism. Its function is as follows. Catalyzes the reduction of the glycolytic intermediate dihydroxyacetone phosphate (DHAP) to sn-glycerol 3-phosphate (G3P), the key precursor for phospholipid synthesis. This Ligilactobacillus salivarius (strain UCC118) (Lactobacillus salivarius) protein is Glycerol-3-phosphate dehydrogenase [NAD(P)+].